Consider the following 301-residue polypeptide: Homoserine O-acetyltransferase (301 aa).

Catalysis depends on Cys-142, which acts as the Acyl-thioester intermediate. Residues Lys-163 and Ser-192 each coordinate substrate. The active-site Proton acceptor is His-235. Glu-237 is a catalytic residue. Residue Arg-249 coordinates substrate.

It belongs to the MetA family.

The protein localises to the cytoplasm. It carries out the reaction L-homoserine + acetyl-CoA = O-acetyl-L-homoserine + CoA. It functions in the pathway amino-acid biosynthesis; L-methionine biosynthesis via de novo pathway; O-acetyl-L-homoserine from L-homoserine: step 1/1. In terms of biological role, transfers an acetyl group from acetyl-CoA to L-homoserine, forming acetyl-L-homoserine. The polypeptide is Homoserine O-acetyltransferase (Clostridium acetobutylicum (strain ATCC 824 / DSM 792 / JCM 1419 / IAM 19013 / LMG 5710 / NBRC 13948 / NRRL B-527 / VKM B-1787 / 2291 / W)).